The sequence spans 368 residues: Probable endopolygalacturonase I (368 aa).

Residues 1–18 (MHSFQLLGLAALGSLVAA) form the signal peptide. Residues 19-31 (APSPSRVSDLTER) constitute a propeptide that is removed on maturation. A disulfide bridge connects residues Cys35 and Cys50. PbH1 repeat units lie at residues 162-192 (ANNL…DISE), 193-214 (SNGV…AINS), 215-235 (GKNI…SIGS), 244-265 (VQGV…RIKT), 273-295 (VSDV…VIQQ), and 307-328 (SNGI…DSKA). Asp207 acts as the Proton donor in catalysis. A disulfide bridge connects residues Cys209 and Cys225. His229 is an active-site residue. Cystine bridges form between Cys335-Cys340 and Cys359-Cys368.

The protein belongs to the glycosyl hydrolase 28 family.

The protein localises to the secreted. It catalyses the reaction (1,4-alpha-D-galacturonosyl)n+m + H2O = (1,4-alpha-D-galacturonosyl)n + (1,4-alpha-D-galacturonosyl)m.. Involved in maceration and soft-rotting of plant tissue. Hydrolyzes the 1,4-alpha glycosidic bonds of de-esterified pectate in the smooth region of the plant cell wall. The protein is Probable endopolygalacturonase I (pgaI) of Aspergillus terreus (strain NIH 2624 / FGSC A1156).